A 365-amino-acid chain; its full sequence is Aminomethyltransferase (365 aa).

Belongs to the GcvT family. The glycine cleavage system is composed of four proteins: P, T, L and H.

It catalyses the reaction N(6)-[(R)-S(8)-aminomethyldihydrolipoyl]-L-lysyl-[protein] + (6S)-5,6,7,8-tetrahydrofolate = N(6)-[(R)-dihydrolipoyl]-L-lysyl-[protein] + (6R)-5,10-methylene-5,6,7,8-tetrahydrofolate + NH4(+). The glycine cleavage system catalyzes the degradation of glycine. In Chlorobium luteolum (strain DSM 273 / BCRC 81028 / 2530) (Pelodictyon luteolum), this protein is Aminomethyltransferase.